The following is a 92-amino-acid chain: Small ribosomal subunit protein uS19 (92 aa).

Belongs to the universal ribosomal protein uS19 family.

Functionally, protein S19 forms a complex with S13 that binds strongly to the 16S ribosomal RNA. The protein is Small ribosomal subunit protein uS19 of Shewanella halifaxensis (strain HAW-EB4).